The sequence spans 69 residues: Sec-independent protein translocase protein TatA (69 aa).

A helical membrane pass occupies residues 1 to 21 (MFPKLGMGELVVILLIVVILF). Residues 43-69 (SFSGEDEEKPSTPGATSSDEASKAKQA) form a disordered region.

This sequence belongs to the TatA/E family. As to quaternary structure, the Tat system comprises two distinct complexes: a TatABC complex, containing multiple copies of TatA, TatB and TatC subunits, and a separate TatA complex, containing only TatA subunits. Substrates initially bind to the TatABC complex, which probably triggers association of the separate TatA complex to form the active translocon.

Its subcellular location is the cell inner membrane. Part of the twin-arginine translocation (Tat) system that transports large folded proteins containing a characteristic twin-arginine motif in their signal peptide across membranes. TatA could form the protein-conducting channel of the Tat system. The polypeptide is Sec-independent protein translocase protein TatA (Anaeromyxobacter sp. (strain Fw109-5)).